The chain runs to 366 residues: Beta sliding clamp (366 aa).

The protein belongs to the beta sliding clamp family. As to quaternary structure, forms a ring-shaped head-to-tail homodimer around DNA which binds and tethers DNA polymerases and other proteins to the DNA. The DNA replisome complex has a single clamp-loading complex (3 tau and 1 each of delta, delta', psi and chi subunits) which binds 3 Pol III cores (1 core on the leading strand and 2 on the lagging strand) each with a beta sliding clamp dimer. Additional proteins in the replisome are other copies of gamma, psi and chi, Ssb, DNA helicase and RNA primase.

The protein localises to the cytoplasm. In terms of biological role, confers DNA tethering and processivity to DNA polymerases and other proteins. Acts as a clamp, forming a ring around DNA (a reaction catalyzed by the clamp-loading complex) which diffuses in an ATP-independent manner freely and bidirectionally along dsDNA. Initially characterized for its ability to contact the catalytic subunit of DNA polymerase III (Pol III), a complex, multichain enzyme responsible for most of the replicative synthesis in bacteria; Pol III exhibits 3'-5' exonuclease proofreading activity. The beta chain is required for initiation of replication as well as for processivity of DNA replication. The protein is Beta sliding clamp (dnaN) of Vibrio cholerae serotype O1 (strain ATCC 39315 / El Tor Inaba N16961).